Consider the following 32-residue polypeptide: Calcitonin (32 aa).

Residues Cys-1 and Cys-7 are joined by a disulfide bond. Pro-32 carries the post-translational modification Proline amide.

This sequence belongs to the calcitonin family.

The protein localises to the secreted. Its function is as follows. Calcitonin is a peptide hormone that causes a rapid but short-lived drop in the level of calcium and phosphate in blood by promoting the incorporation of those ions in the bones. Calcitonin function is mediated by the calcitonin receptor/CALCR and the CALCR-RAMP2 (AMYR2) receptor complex. This chain is Calcitonin (CALCA), found in Sus scrofa (Pig).